Consider the following 117-residue polypeptide: MMIEVLKSKIHCARVTEANLNYMGSITIDEDLLDAANMIPGEKVYIADNNNGERFETYIIKGERGSGKICLNGAAARKVQPDDIVIIMSYALMDFEEAKSFKPTVIFPDPATNSVVK.

Ser-25 acts as the Schiff-base intermediate with substrate; via pyruvic acid in catalysis. Residue Ser-25 is modified to Pyruvic acid (Ser). Thr-57 lines the substrate pocket. The Proton donor role is filled by Tyr-58. 73–75 (GAA) is a substrate binding site.

The protein belongs to the PanD family. In terms of assembly, heterooctamer of four alpha and four beta subunits. Requires pyruvate as cofactor. In terms of processing, is synthesized initially as an inactive proenzyme, which is activated by self-cleavage at a specific serine bond to produce a beta-subunit with a hydroxyl group at its C-terminus and an alpha-subunit with a pyruvoyl group at its N-terminus.

Its subcellular location is the cytoplasm. It catalyses the reaction L-aspartate + H(+) = beta-alanine + CO2. The protein operates within cofactor biosynthesis; (R)-pantothenate biosynthesis; beta-alanine from L-aspartate: step 1/1. Functionally, catalyzes the pyruvoyl-dependent decarboxylation of aspartate to produce beta-alanine. In Bacteroides thetaiotaomicron (strain ATCC 29148 / DSM 2079 / JCM 5827 / CCUG 10774 / NCTC 10582 / VPI-5482 / E50), this protein is Aspartate 1-decarboxylase.